Here is a 286-residue protein sequence, read N- to C-terminus: Release factor glutamine methyltransferase (286 aa).

S-adenosyl-L-methionine is bound by residues Asp148 and Asn194. Asn194–Tyr197 contributes to the substrate binding site.

Belongs to the protein N5-glutamine methyltransferase family. PrmC subfamily.

It carries out the reaction L-glutaminyl-[peptide chain release factor] + S-adenosyl-L-methionine = N(5)-methyl-L-glutaminyl-[peptide chain release factor] + S-adenosyl-L-homocysteine + H(+). Methylates the class 1 translation termination release factors RF1/PrfA and RF2/PrfB on the glutamine residue of the universally conserved GGQ motif. The sequence is that of Release factor glutamine methyltransferase from Leptospira interrogans serogroup Icterohaemorrhagiae serovar Lai (strain 56601).